The primary structure comprises 686 residues: Lysophospholipase 3 (686 aa).

The first 26 residues, 1-26 (MIRPLCSKIIISYIFAISQFLLAANA), serve as a signal peptide directing secretion. Residues 39-592 (SCPDDINLVR…KNYCWNGTLD (554 aa)) enclose the PLA2c domain. 14 N-linked (GlcNAc...) asparagine glycosylation sites follow: N56, N82, N129, N166, N221, N283, N313, N351, N495, N519, N547, N571, N588, and N614. N659 is lipidated: GPI-anchor amidated asparagine. A propeptide spans 660-686 (SGSHLSGISVKFSAMIMLTLLMFTGAV) (removed in mature form).

This sequence belongs to the lysophospholipase family.

The protein resides in the cell membrane. It catalyses the reaction a 1-acyl-sn-glycero-3-phosphocholine + H2O = sn-glycerol 3-phosphocholine + a fatty acid + H(+). Functionally, sequentially removes both fatty acyl groups from diacylglycerophospholipids and therefore has both phospholipase A and lysophospholipase activities. Substrate preference is phosphatidylserine &gt; phosphatidylinositol. Does not cleave phosphatidylcholine, phosphatidylethanolamine, phosphatidic acid and phosphatidylinositol-bisphosphate. Mainly responsible for the degradation of phosphatidylinositol in vivo. The sequence is that of Lysophospholipase 3 (PLB3) from Saccharomyces cerevisiae (strain ATCC 204508 / S288c) (Baker's yeast).